A 322-amino-acid polypeptide reads, in one-letter code: Elongation factor P--(R)-beta-lysine ligase (322 aa).

72–74 (SPE) serves as a coordination point for substrate. ATP is bound by residues 96-98 (RNN) and Asn-106. Tyr-115 contacts substrate. Position 241 to 242 (241 to 242 (EL)) interacts with ATP. Glu-248 is a binding site for substrate. An ATP-binding site is contributed by Gly-297.

Belongs to the class-II aminoacyl-tRNA synthetase family. EpmA subfamily. Homodimer.

The catalysed reaction is D-beta-lysine + L-lysyl-[protein] + ATP = N(6)-((3R)-3,6-diaminohexanoyl)-L-lysyl-[protein] + AMP + diphosphate + H(+). Its function is as follows. With EpmB is involved in the beta-lysylation step of the post-translational modification of translation elongation factor P (EF-P). Catalyzes the ATP-dependent activation of (R)-beta-lysine produced by EpmB, forming a lysyl-adenylate, from which the beta-lysyl moiety is then transferred to the epsilon-amino group of a conserved specific lysine residue in EF-P. In Buchnera aphidicola subsp. Baizongia pistaciae (strain Bp), this protein is Elongation factor P--(R)-beta-lysine ligase.